We begin with the raw amino-acid sequence, 95 residues long: Protein TusB (95 aa).

This sequence belongs to the DsrH/TusB family. Heterohexamer, formed by a dimer of trimers. The hexameric TusBCD complex contains 2 copies each of TusB, TusC and TusD. The TusBCD complex interacts with TusE.

The protein resides in the cytoplasm. Functionally, part of a sulfur-relay system required for 2-thiolation of 5-methylaminomethyl-2-thiouridine (mnm(5)s(2)U) at tRNA wobble positions. The sequence is that of Protein TusB from Salmonella dublin (strain CT_02021853).